The following is a 242-amino-acid chain: Phosphatidylcholine synthase (242 aa).

Residues 1-15 (MKIFNYKRVPYAEMR) are Cytoplasmic-facing. Residues 16 to 36 (AFSVHILTASGSFLAFLGVVA) form a helical membrane-spanning segment. The Periplasmic segment spans residues 37–41 (AAEHR). A helical membrane pass occupies residues 42–62 (FIDMFWWLGLALLVDGIDGPI). The Cytoplasmic portion of the chain corresponds to 63–76 (ARKVRVKEVLPNWS). A helical membrane pass occupies residues 77 to 97 (GDTLDNIIDYVTYVLLPAFAL). At 98-100 (YQS) the chain is on the periplasmic side. The chain crosses the membrane as a helical span at residues 101–121 (GMIGEPWSFVAAGMIVVSSAI). Residues 122–133 (YYADMGMKTDEY) are Cytoplasmic-facing. Residues 134 to 154 (FFSGFPVVWNMIVFTLFVIDA) form a helical membrane-spanning segment. Residues 155-159 (SATTA) are Periplasmic-facing. The helical transmembrane segment at 160 to 180 (LTVVIVSVVLTFLPINFLHPV) threads the bilayer. Over 181 to 187 (RVKRLRP) the chain is Cytoplasmic. Residues 188 to 208 (LNLGVFFLWSALGIFSLLMHF) form a helical membrane-spanning segment. The Periplasmic segment spans residues 209-214 (DTPEWA). The helical transmembrane segment at 215–235 (LILFIVTGAYLYVIGAVLQFF) threads the bilayer. Over 236–242 (PALGRET) the chain is Cytoplasmic.

Belongs to the CDP-alcohol phosphatidyltransferase class-I family. Requires Mn(2+) as cofactor.

The protein resides in the cell inner membrane. The enzyme catalyses a CDP-1,2-diacyl-sn-glycerol + choline = a 1,2-diacyl-sn-glycero-3-phosphocholine + CMP + H(+). In terms of biological role, condenses choline with CDP-diglyceride to produce phosphatidylcholine and CMP. The sequence is that of Phosphatidylcholine synthase from Rhizobium johnstonii (strain DSM 114642 / LMG 32736 / 3841) (Rhizobium leguminosarum bv. viciae).